The chain runs to 969 residues: Bifunctional glutamine synthetase adenylyltransferase/adenylyl-removing enzyme (969 aa).

Residues 1-456 form an adenylyl removase region; the sequence is MNWQANIHKL…HFEQLFAAPH (456 aa). Residues 466 to 969 are adenylyl transferase; the sequence is EKRLAEVWLG…SALLEDESAK (504 aa).

Belongs to the GlnE family. Mg(2+) is required as a cofactor.

It carries out the reaction [glutamine synthetase]-O(4)-(5'-adenylyl)-L-tyrosine + phosphate = [glutamine synthetase]-L-tyrosine + ADP. It catalyses the reaction [glutamine synthetase]-L-tyrosine + ATP = [glutamine synthetase]-O(4)-(5'-adenylyl)-L-tyrosine + diphosphate. Involved in the regulation of glutamine synthetase GlnA, a key enzyme in the process to assimilate ammonia. When cellular nitrogen levels are high, the C-terminal adenylyl transferase (AT) inactivates GlnA by covalent transfer of an adenylyl group from ATP to specific tyrosine residue of GlnA, thus reducing its activity. Conversely, when nitrogen levels are low, the N-terminal adenylyl removase (AR) activates GlnA by removing the adenylyl group by phosphorolysis, increasing its activity. The regulatory region of GlnE binds the signal transduction protein PII (GlnB) which indicates the nitrogen status of the cell. The sequence is that of Bifunctional glutamine synthetase adenylyltransferase/adenylyl-removing enzyme from Nitrosococcus oceani (strain ATCC 19707 / BCRC 17464 / JCM 30415 / NCIMB 11848 / C-107).